The following is a 154-amino-acid chain: Iron-sulfur cluster assembly 2 homolog, mitochondrial (154 aa).

Residues 1–8 (MAASRALS) constitute a mitochondrion transit peptide. Residues Cys79, Cys144, and Cys146 each coordinate Fe cation.

This sequence belongs to the HesB/IscA family. Heterotetramer; forms a dimer of dimers with IBA57. Interacts with [2Fe-2S]-ISCA2 forming the heterodimer [2Fe- 2S]-ISCA2-IBA57 complex; [2Fe-2S] cluster binding is absolutely required to promote the complex formation.

It localises to the mitochondrion. Its function is as follows. Involved in the maturation of mitochondrial 4Fe-4S proteins functioning late in the iron-sulfur cluster assembly pathway. May be involved in the binding of an intermediate of Fe/S cluster assembly. This Mus musculus (Mouse) protein is Iron-sulfur cluster assembly 2 homolog, mitochondrial (Isca2).